A 187-amino-acid chain; its full sequence is Holliday junction resolvase (187 aa).

It belongs to the RuvC family. Poxviruses-type subfamily. Requires Mg(2+) as cofactor. In terms of processing, acylated by palmitic acid group(s).

It is found in the membrane. In terms of biological role, nuclease that specifically cleaves and resolves four-way DNA Holliday junctions into linear duplex products. In Vaccinia virus (strain Ankara) (VACV), this protein is Holliday junction resolvase.